We begin with the raw amino-acid sequence, 730 residues long: Exostosin-1a (730 aa).

Residues 1-6 (MQAKKR) are Cytoplasmic-facing. The chain crosses the membrane as a helical; Signal-anchor for type II membrane protein span at residues 7–27 (YLILFSAGVCLILLFYLQGPA). The Lumenal segment spans residues 28-730 (SRRTPKRGDD…RKKYRDIERL (703 aa)). A glycan (N-linked (GlcNAc...) asparagine) is linked at Asn-314. Positions 533, 549, 550, 551, 637, 638, and 685 each coordinate UDP-N-acetyl-alpha-D-glucosamine. Asp-551 provides a ligand contact to Mn(2+). Cys-636 and Cys-688 are joined by a disulfide. Residue Asp-638 is part of the active site.

This sequence belongs to the glycosyltransferase 47 family. Mn(2+) serves as cofactor.

The protein localises to the endoplasmic reticulum membrane. It catalyses the reaction 3-O-{[(1-&gt;4)-beta-D-GlcA-(1-&gt;4)-alpha-D-GlcNAc](n)-(1-&gt;4)-beta-D-GlcA-(1-&gt;3)-beta-D-Gal-(1-&gt;3)-beta-D-Gal-(1-&gt;4)-beta-D-Xyl}-L-seryl-[protein] + UDP-N-acetyl-alpha-D-glucosamine = 3-O-{alpha-D-GlcNAc-[(1-&gt;4)-beta-D-GlcA-(1-&gt;4)-alpha-D-GlcNAc](n)-(1-&gt;4)-beta-D-GlcA-(1-&gt;3)-beta-D-Gal-(1-&gt;3)-beta-D-Gal-(1-&gt;4)-beta-D-Xyl}-L-seryl-[protein] + UDP + H(+). It carries out the reaction 3-O-{alpha-D-GlcNAc-[(1-&gt;4)-beta-D-GlcA-(1-&gt;4)-alpha-D-GlcNAc](n)-(1-&gt;4)-beta-D-GlcA-(1-&gt;3)-beta-D-Gal-(1-&gt;3)-beta-D-Gal-(1-&gt;4)-beta-D-Xyl}-L-seryl-[protein] + UDP-alpha-D-glucuronate = 3-O-{[(1-&gt;4)-beta-D-GlcA-(1-&gt;4)-alpha-D-GlcNAc](n+1)-(1-&gt;4)-beta-D-GlcA-(1-&gt;3)-beta-D-Gal-(1-&gt;3)-beta-D-Gal-(1-&gt;4)-beta-D-Xyl}-L-seryl-[protein] + UDP + H(+). It functions in the pathway protein modification; protein glycosylation. Functionally, glycosyltransferase required for the biosynthesis of heparan-sulfate. In Danio rerio (Zebrafish), this protein is Exostosin-1a (ext1a).